The following is a 71-amino-acid chain: Small ribosomal subunit protein bS18 (71 aa).

The protein belongs to the bacterial ribosomal protein bS18 family. Part of the 30S ribosomal subunit. Forms a tight heterodimer with protein bS6.

Its function is as follows. Binds as a heterodimer with protein bS6 to the central domain of the 16S rRNA, where it helps stabilize the platform of the 30S subunit. The protein is Small ribosomal subunit protein bS18 of Thermosynechococcus vestitus (strain NIES-2133 / IAM M-273 / BP-1).